The primary structure comprises 238 residues: Small ribosomal subunit protein uS2 (238 aa).

Belongs to the universal ribosomal protein uS2 family.

The polypeptide is Small ribosomal subunit protein uS2 (Moorella thermoacetica (strain ATCC 39073 / JCM 9320)).